The following is a 753-amino-acid chain: 5-methyltetrahydropteroyltriglutamate--homocysteine methyltransferase (753 aa).

Residues 17–20 (RELK) and Lys117 contribute to the 5-methyltetrahydropteroyltri-L-glutamate site. L-homocysteine-binding positions include 431 to 433 (IGS) and Glu484. L-methionine contacts are provided by residues 431–433 (IGS) and Glu484. Residues 515-516 (RC) and Trp561 each bind 5-methyltetrahydropteroyltri-L-glutamate. Position 599 (Asp599) interacts with L-homocysteine. L-methionine is bound at residue Asp599. Glu605 is a 5-methyltetrahydropteroyltri-L-glutamate binding site. The Zn(2+) site is built by His641, Cys643, and Glu665. Residue His694 is the Proton donor of the active site. Residue Cys726 participates in Zn(2+) binding.

It belongs to the vitamin-B12 independent methionine synthase family. Zn(2+) serves as cofactor.

It catalyses the reaction 5-methyltetrahydropteroyltri-L-glutamate + L-homocysteine = tetrahydropteroyltri-L-glutamate + L-methionine. Its pathway is amino-acid biosynthesis; L-methionine biosynthesis via de novo pathway; L-methionine from L-homocysteine (MetE route): step 1/1. Catalyzes the transfer of a methyl group from 5-methyltetrahydrofolate to homocysteine resulting in methionine formation. In Shigella flexneri serotype 5b (strain 8401), this protein is 5-methyltetrahydropteroyltriglutamate--homocysteine methyltransferase.